Consider the following 255-residue polypeptide: Protein N-terminal and lysine N-methyltransferase efm7 (255 aa).

The disordered stretch occupies residues 1 to 25; sequence MADNDFEGFGIFEEPEGFRPSTPPP. S-adenosyl-L-methionine is bound by residues tryptophan 58, 84–86, aspartate 106, tryptophan 137, and serine 162; that span reads GAG.

The protein belongs to the class I-like SAM-binding methyltransferase superfamily. EFM7 family.

It localises to the cytoplasm. S-adenosyl-L-methionine-dependent protein methyltransferase that trimethylates the N-terminal glycine 'Gly-2' of elongation factor 1-alpha, before also catalyzing the mono- and dimethylation of 'Lys-3'. The protein is Protein N-terminal and lysine N-methyltransferase efm7 of Schizosaccharomyces pombe (strain 972 / ATCC 24843) (Fission yeast).